The primary structure comprises 853 residues: Translation initiation factor IF-2 (853 aa).

Disordered stretches follow at residues 1–68 and 94–265; these read MSDT…ASDG and LEQR…DKTS. Polar residues predominate over residues 20-32; that stretch reads RKTSGTVKQSFSH. A compositionally biased stretch (basic and acidic residues) spans 94–161; it reads LEQRKAEEAS…ASREAVERPS (68 aa). The segment covering 163–176 has biased composition (low complexity); the sequence is APRAAPAAQTPPAA. Basic and acidic residues-rich tracts occupy residues 196–219 and 245–265; these read PARD…DAER and RARE…DKTS. One can recognise a tr-type G domain in the interval 347–515; sequence PRAPIVTIMG…AISIQAEILE (169 aa). The tract at residues 356–363 is G1; sequence GHVDHGKT. Position 356 to 363 (356 to 363) interacts with GTP; it reads GHVDHGKT. A G2 region spans residues 381–385; the sequence is GITQH. Positions 403–406 are G3; that stretch reads DTPG. Residues 403 to 407 and 457 to 460 each bind GTP; these read DTPGH and TKSD. The interval 457-460 is G4; that stretch reads TKSD. The segment at 493–495 is G5; that stretch reads SAK.

Belongs to the TRAFAC class translation factor GTPase superfamily. Classic translation factor GTPase family. IF-2 subfamily.

It is found in the cytoplasm. Its function is as follows. One of the essential components for the initiation of protein synthesis. Protects formylmethionyl-tRNA from spontaneous hydrolysis and promotes its binding to the 30S ribosomal subunits. Also involved in the hydrolysis of GTP during the formation of the 70S ribosomal complex. The sequence is that of Translation initiation factor IF-2 from Hyphomonas neptunium (strain ATCC 15444).